Here is a 435-residue protein sequence, read N- to C-terminus: 3-phosphoshikimate 1-carboxyvinyltransferase (435 aa).

Residues lysine 21, serine 22, and arginine 26 each contribute to the 3-phosphoshikimate site. A phosphoenolpyruvate-binding site is contributed by lysine 21. Residues glycine 98 and arginine 126 each contribute to the phosphoenolpyruvate site. The 3-phosphoshikimate site is built by serine 169, serine 170, glutamine 171, serine 197, aspartate 312, and lysine 339. Glutamine 171 contacts phosphoenolpyruvate. Aspartate 312 (proton acceptor) is an active-site residue. Positions 343, 386, and 412 each coordinate phosphoenolpyruvate.

Belongs to the EPSP synthase family. In terms of assembly, monomer.

Its subcellular location is the cytoplasm. The enzyme catalyses 3-phosphoshikimate + phosphoenolpyruvate = 5-O-(1-carboxyvinyl)-3-phosphoshikimate + phosphate. Its pathway is metabolic intermediate biosynthesis; chorismate biosynthesis; chorismate from D-erythrose 4-phosphate and phosphoenolpyruvate: step 6/7. Its function is as follows. Catalyzes the transfer of the enolpyruvyl moiety of phosphoenolpyruvate (PEP) to the 5-hydroxyl of shikimate-3-phosphate (S3P) to produce enolpyruvyl shikimate-3-phosphate and inorganic phosphate. This chain is 3-phosphoshikimate 1-carboxyvinyltransferase, found in Clostridium beijerinckii (strain ATCC 51743 / NCIMB 8052) (Clostridium acetobutylicum).